Here is a 406-residue protein sequence, read N- to C-terminus: Cysteine desulfurase (406 aa).

Lysine 226 is subject to N6-(pyridoxal phosphate)lysine. Cysteine 364 serves as the catalytic Cysteine persulfide intermediate.

This sequence belongs to the class-V pyridoxal-phosphate-dependent aminotransferase family. Csd subfamily. Homodimer. Interacts with SufE and the SufBCD complex composed of SufB, SufC and SufD. The interaction with SufE is required to mediate the direct transfer of the sulfur atom from the S-sulfanylcysteine. Pyridoxal 5'-phosphate serves as cofactor.

The protein localises to the cytoplasm. It catalyses the reaction (sulfur carrier)-H + L-cysteine = (sulfur carrier)-SH + L-alanine. The catalysed reaction is L-selenocysteine + AH2 = hydrogenselenide + L-alanine + A + H(+). Its pathway is cofactor biosynthesis; iron-sulfur cluster biosynthesis. Functionally, cysteine desulfurases mobilize the sulfur from L-cysteine to yield L-alanine, an essential step in sulfur metabolism for biosynthesis of a variety of sulfur-containing biomolecules. Component of the suf operon, which is activated and required under specific conditions such as oxidative stress and iron limitation. Acts as a potent selenocysteine lyase in vitro, that mobilizes selenium from L-selenocysteine. Selenocysteine lyase activity is however unsure in vivo. The protein is Cysteine desulfurase of Klebsiella pneumoniae (strain 342).